The sequence spans 148 residues: Lysozyme C-1 (148 aa).

An N-terminal signal peptide occupies residues 1 to 18; sequence MKALLTLGLLLLSVTAQA. The 130-residue stretch at 19–148 folds into the C-type lysozyme domain; the sequence is KVYNRCELAR…LSQYIRNCGV (130 aa). Intrachain disulfides connect cysteine 24–cysteine 146, cysteine 48–cysteine 134, cysteine 83–cysteine 99, and cysteine 95–cysteine 113. Catalysis depends on residues glutamate 53 and aspartate 71.

This sequence belongs to the glycosyl hydrolase 22 family. In terms of assembly, monomer. As to expression, expressed strongly only in small intestine.

It localises to the secreted. It carries out the reaction Hydrolysis of (1-&gt;4)-beta-linkages between N-acetylmuramic acid and N-acetyl-D-glucosamine residues in a peptidoglycan and between N-acetyl-D-glucosamine residues in chitodextrins.. Lysozymes have primarily a bacteriolytic function; those in tissues and body fluids are associated with the monocyte-macrophage system and enhance the activity of immunoagents. Lyz1 is active against a range of Gram-positive and Gram-negative bacteria. Less effective than Lyz2 in killing Gram-negative bacteria. Lyz1 and Lyz2 are equally effective in killing Gram-positive bacteria. In Mus musculus (Mouse), this protein is Lysozyme C-1 (Lyz1).